The sequence spans 334 residues: Heat-inducible transcription repressor HrcA (334 aa).

It belongs to the HrcA family.

In terms of biological role, negative regulator of class I heat shock genes (grpE-dnaK-dnaJ and groELS operons). Prevents heat-shock induction of these operons. The chain is Heat-inducible transcription repressor HrcA from Acidovorax sp. (strain JS42).